The sequence spans 437 residues: UDP-N-acetylmuramate--L-alanine ligase (437 aa).

108 to 114 (GAHGKTS) contributes to the ATP binding site.

Belongs to the MurCDEF family.

Its subcellular location is the cytoplasm. It catalyses the reaction UDP-N-acetyl-alpha-D-muramate + L-alanine + ATP = UDP-N-acetyl-alpha-D-muramoyl-L-alanine + ADP + phosphate + H(+). It functions in the pathway cell wall biogenesis; peptidoglycan biosynthesis. Functionally, cell wall formation. The polypeptide is UDP-N-acetylmuramate--L-alanine ligase (Staphylococcus saprophyticus subsp. saprophyticus (strain ATCC 15305 / DSM 20229 / NCIMB 8711 / NCTC 7292 / S-41)).